Here is a 395-residue protein sequence, read N- to C-terminus: Tyrosine--tRNA ligase (395 aa).

The short motif at 42–51 is the 'HIGH' region element; sequence PTAPDIHLGH. A 'KMSKS' region motif is present at residues 226 to 230; sequence KMSKS. Residue lysine 229 participates in ATP binding. Residues 334 to 394 form the S4 RNA-binding domain; sequence IGLANLLKEA…GKRKFARVTV (61 aa).

This sequence belongs to the class-I aminoacyl-tRNA synthetase family. TyrS type 2 subfamily. Homodimer.

It localises to the cytoplasm. It carries out the reaction tRNA(Tyr) + L-tyrosine + ATP = L-tyrosyl-tRNA(Tyr) + AMP + diphosphate + H(+). Its function is as follows. Catalyzes the attachment of tyrosine to tRNA(Tyr) in a two-step reaction: tyrosine is first activated by ATP to form Tyr-AMP and then transferred to the acceptor end of tRNA(Tyr). This chain is Tyrosine--tRNA ligase, found in Mannheimia succiniciproducens (strain KCTC 0769BP / MBEL55E).